The primary structure comprises 1634 residues: DNA polymerase (1634 aa).

DOD-type homing endonuclease domains lie at 552-693 and 1163-1295; these read LIGI…RLGI and FLGF…LVGI.

It belongs to the DNA polymerase type-B family. Post-translationally, this protein undergoes a protein self splicing that involves a post-translational excision of the intervening region (intein) followed by peptide ligation.

It carries out the reaction DNA(n) + a 2'-deoxyribonucleoside 5'-triphosphate = DNA(n+1) + diphosphate. This chain is DNA polymerase (pol), found in Methanocaldococcus jannaschii (strain ATCC 43067 / DSM 2661 / JAL-1 / JCM 10045 / NBRC 100440) (Methanococcus jannaschii).